We begin with the raw amino-acid sequence, 519 residues long: uncharacterized protein (519 aa).

The next 14 helical transmembrane spans lie at 37–57 (ISMSLFHEIVFVFIACTAQLM), 82–102 (GQLSWFPASYSLTVGTFILIA), 114–134 (MFVLGYIWFCIWSLISGFSYY), 146–166 (ALTGIAPAFLLPNALALLGRV), 175–195 (LIFALFGATAPNGFLLGSVFS), 209–229 (WTTAIVCIVFAIIGYFAIPHI), 240–260 (FDYLGAFFGVSGLVLINFSWN), 269–289 (VPYVYILLIIGFLSLVVFVLV), 309–329 (CVLICVAAGWACFGIWMYYLW), 337–357 (FATPLLVTAQLTPVGISGCAA), 373–393 (IMVVSMIAFTVGTILIATAPI), 402–422 (FVSIIVTPWGMDMSFPAATLM), 434–454 (IAASLVSTVVNYSISIGLGIA), and 475–495 (AWYMGTGFGGLGVCVAILTVF).

This sequence belongs to the major facilitator superfamily.

It localises to the endoplasmic reticulum. The protein resides in the membrane. This is an uncharacterized protein from Schizosaccharomyces pombe (strain 972 / ATCC 24843) (Fission yeast).